The following is a 203-amino-acid chain: NADH-quinone oxidoreductase subunit C (203 aa).

Belongs to the complex I 30 kDa subunit family. NDH-1 is composed of 14 different subunits. Subunits NuoB, C, D, E, F, and G constitute the peripheral sector of the complex.

Its subcellular location is the cell inner membrane. The enzyme catalyses a quinone + NADH + 5 H(+)(in) = a quinol + NAD(+) + 4 H(+)(out). Functionally, NDH-1 shuttles electrons from NADH, via FMN and iron-sulfur (Fe-S) centers, to quinones in the respiratory chain. The immediate electron acceptor for the enzyme in this species is believed to be ubiquinone. Couples the redox reaction to proton translocation (for every two electrons transferred, four hydrogen ions are translocated across the cytoplasmic membrane), and thus conserves the redox energy in a proton gradient. The protein is NADH-quinone oxidoreductase subunit C of Verminephrobacter eiseniae (strain EF01-2).